Here is an 810-residue protein sequence, read N- to C-terminus: Transducer protein CosT (810 aa).

The Cytoplasmic portion of the chain corresponds to 1–38 (MSEPTADAGDNSPSSTDTAPLDRVKAIALLPLRSYLVK). Residues 39 to 59 (FAVALLVILVIIAAGGFWVQA) traverse the membrane as a helical segment. The Extracellular portion of the chain corresponds to 60 to 323 (DATATLEANT…AFALSNQIRT (264 aa)). The helical transmembrane segment at 324 to 344 (GILGFILVALVGVVLVGGTIG) threads the bilayer. One can recognise an HAMP 1 domain in the interval 345–397 (RNTAAAVQSLSAAAAEIEAGNYDVDVASSRRDEIGQLFASIGSMRDALVTQID). The Cytoplasmic portion of the chain corresponds to 345 to 810 (RNTAAAVQSL…DRDVTPTQTD (466 aa)). The interval 403–427 (REQATEAQQDAEAERERAEDARERA) is disordered. Residues 414–427 (EAERERAEDARERA) show a composition bias toward basic and acidic residues. One can recognise an HAMP 2 domain in the interval 439-493 (AELEAQAERYSDVMAACADGDLTRRMPADDTDNEAMAAIAASFNEMLAQWEHTII). The 237-residue stretch at 512 to 748 (GAADAERASG…EAVSMTEEVA (237 aa)) folds into the Methyl-accepting transducer domain. Glutamate methyl ester (Glu) is present on residues Glu556 and Glu739. The segment at 751–784 (SDSTAGEAQSVSAAAEEQAASMSEISDSVESLSG) is disordered. A compositionally biased stretch (low complexity) spans 755–774 (AGEAQSVSAAAEEQAASMSE). Residues 775-784 (ISDSVESLSG) are compositionally biased toward polar residues.

This sequence belongs to the methyl-accepting chemotaxis (MCP) protein family. In terms of processing, methylated by CheR.

The protein resides in the cell membrane. Its function is as follows. Mediates chemotaxis towards compatible osmolytes. Probably transduces the signal from the substrate-binding protein CosB to the histidine kinase CheA. The chain is Transducer protein CosT (cosT) from Halobacterium salinarum (strain ATCC 700922 / JCM 11081 / NRC-1) (Halobacterium halobium).